Reading from the N-terminus, the 684-residue chain is Histone-lysine N-methyltransferase SETMAR (684 aa).

A histone-lysine N-methyltransferase region spans residues M1–M345. The Pre-SET domain maps to P73–G136. The Zn(2+) site is built by C75, C77, C82, C87, C89, C118, C122, C124, and C128. In terms of domain architecture, SET spans F139 to S263. Residues K149–W151, Y192, R220, and N223–H224 each bind S-adenosyl-L-methionine. Zn(2+)-binding residues include C226, C287, C289, and C294. One can recognise a Post-SET domain in the interval L283 to P299. Residues L346–D684 form a mariner transposase Hsmar1 region. 2 consecutive DNA-binding regions (H-T-H motif) follow at residues K364 to K395 and T428 to K448. Position 496 (D496) interacts with Mg(2+). K498 is modified (N6-methyllysine). Position 508 is a phosphoserine; by CHEK1 (S508). A Mg(2+)-binding site is contributed by D588.

In the N-terminal section; belongs to the class V-like SAM-binding methyltransferase superfamily. It in the C-terminal section; belongs to the mariner transposase family. Homodimer. Interacts with PRPF19; required for SETMAR recruitment to damaged DNA sites. Interacts with PCNA. Interacts with TOP2A; stimulates TOP2A topoisomerase activity. May interact with RAD9A and/or RAD9B. Mg(2+) serves as cofactor. In terms of processing, methylated. Methylation regulates activity in DNA decatenation. Phosphorylated at Ser-508 by CHEK1 and dephosphorylated by protein phosphatase 2A/PP2A. Phosphorylation at Ser-508 is enhanced by DNA damage and promotes recruitment to damaged DNA. It stimulates DNA repair and impairs replication fork restart. In terms of tissue distribution, widely expressed, with highest expression in placenta and ovary and lowest expression in skeletal muscle.

Its subcellular location is the nucleus. It localises to the chromosome. The enzyme catalyses L-lysyl(36)-[histone H3] + 2 S-adenosyl-L-methionine = N(6),N(6)-dimethyl-L-lysyl(36)-[histone H3] + 2 S-adenosyl-L-homocysteine + 2 H(+). Protein derived from the fusion of a methylase with the transposase of an Hsmar1 transposon that plays a role in DNA double-strand break repair, stalled replication fork restart and DNA integration. DNA-binding protein, it is indirectly recruited to sites of DNA damage through protein-protein interactions. Also has kept a sequence-specific DNA-binding activity recognizing the 19-mer core of the 5'-terminal inverted repeats (TIRs) of the Hsmar1 element and displays a DNA nicking and end joining activity. In parallel, has a histone methyltransferase activity and methylates 'Lys-4' and 'Lys-36' of histone H3. Specifically mediates dimethylation of H3 'Lys-36' at sites of DNA double-strand break and may recruit proteins required for efficient DSB repair through non-homologous end-joining. Also regulates replication fork processing, promoting replication fork restart and regulating DNA decatenation through stimulation of the topoisomerase activity of TOP2A. The sequence is that of Histone-lysine N-methyltransferase SETMAR from Homo sapiens (Human).